Here is a 240-residue protein sequence, read N- to C-terminus: Transcriptional regulatory protein rxt2 (240 aa).

The protein belongs to the RXT2 family. In terms of assembly, component of the RPD3C(L) complex.

It is found in the nucleus. Functionally, component of the RPD3C(L) histone deacetylase complex (HDAC) responsible for the deacetylation of lysine residues on the N-terminal part of the core histones (H2A, H2B, H3 and H4). Histone deacetylation gives a tag for epigenetic repression and plays an important role in transcriptional regulation, cell cycle progression and developmental events. This chain is Transcriptional regulatory protein rxt2 (rtx2), found in Schizosaccharomyces pombe (strain 972 / ATCC 24843) (Fission yeast).